The primary structure comprises 482 residues: Dual specificity protein phosphatase 10 (482 aa).

The Rhodanese domain occupies 168–285 (PSQGPVIIDC…FKQNHENLCD (118 aa)). Residues 199–215 (KISRRRLQQGKITVLDL) are interaction with MAP kinases. One can recognise a Tyrosine-protein phosphatase domain in the interval 321–464 (ELTPILPFLF…LLEFEEDLNN (144 aa)). C408 serves as the catalytic Phosphocysteine intermediate.

The protein belongs to the protein-tyrosine phosphatase family. Non-receptor class dual specificity subfamily. As to quaternary structure, monomer. Interacts with MAPK14.

The protein resides in the cytoplasm. Its subcellular location is the nucleus. It carries out the reaction O-phospho-L-tyrosyl-[protein] + H2O = L-tyrosyl-[protein] + phosphate. The enzyme catalyses O-phospho-L-seryl-[protein] + H2O = L-seryl-[protein] + phosphate. The catalysed reaction is O-phospho-L-threonyl-[protein] + H2O = L-threonyl-[protein] + phosphate. Functionally, protein phosphatase involved in the inactivation of MAP kinases. Has a specificity for the MAPK11/MAPK12/MAPK13/MAPK14 subfamily. It preferably dephosphorylates p38. The sequence is that of Dual specificity protein phosphatase 10 (DUSP10) from Bos taurus (Bovine).